The primary structure comprises 1114 residues: Extracellular sulfatase SULF-1 homolog (1114 aa).

The N-terminal stretch at M1 to S25 is a signal peptide. D62, D63, and C98 together coordinate Ca(2+). The active-site Nucleophile is C98. C98 carries the post-translational modification 3-oxoalanine (Cys). N-linked (GlcNAc...) asparagine glycans are attached at residues N122, N159, N181, N208, and N251. The Ca(2+) site is built by D327 and H328. N447 is a glycosylation site (N-linked (GlcNAc...) asparagine). A compositionally biased stretch (low complexity) spans S466 to A479. Positions S466–M504 are disordered. The span at E483–G502 shows a compositional bias: acidic residues. Residues N683, N713, and N743 are each glycosylated (N-linked (GlcNAc...) asparagine). The disordered stretch occupies residues K781–A812. Residues R795 to D804 show a composition bias toward basic and acidic residues. N817 carries N-linked (GlcNAc...) asparagine glycosylation. Positions A876–R895 are enriched in basic and acidic residues. The tract at residues A876–R901 is disordered. N-linked (GlcNAc...) asparagine glycans are attached at residues N945, N955, and N974. The tract at residues L1073 to A1114 is disordered. Polar residues predominate over residues T1095–A1114.

It belongs to the sulfatase family. Ca(2+) is required as a cofactor. Post-translationally, the conversion to 3-oxoalanine (also known as C-formylglycine, FGly), of a serine or cysteine residue in prokaryotes and of a cysteine residue in eukaryotes, is critical for catalytic activity.

It localises to the endoplasmic reticulum. The protein localises to the golgi apparatus. Its subcellular location is the golgi stack. It is found in the cell surface. The chain is Extracellular sulfatase SULF-1 homolog (Sulf1) from Drosophila melanogaster (Fruit fly).